A 240-amino-acid chain; its full sequence is Aldehyde dehydrogenase, cytosolic 2 (240 aa).

Catalysis depends on residues glutamate 8 and cysteine 42. N6-acetyllysine occurs at positions 106, 149, 151, and 174.

Belongs to the aldehyde dehydrogenase family. Homotetramer. Non-lens specific, predominant form expressed in the liver.

It localises to the cytoplasm. The catalysed reaction is an aldehyde + NAD(+) + H2O = a carboxylate + NADH + 2 H(+). The protein operates within alcohol metabolism; ethanol degradation; acetate from ethanol: step 2/2. In terms of biological role, elephant shrews, in contrast to other mammals, possess both a lens- and a non-lens specific class-1 aldehyde dehydrogenase. Can convert/oxidize retinaldehyde to retinoic acid. This is Aldehyde dehydrogenase, cytosolic 2 from Macroscelides proboscideus (Short-eared elephant shrew).